A 424-amino-acid polypeptide reads, in one-letter code: Serine hydroxymethyltransferase (424 aa).

(6S)-5,6,7,8-tetrahydrofolate is bound by residues Leu118 and 122–124 (GHL). Residue Lys227 is modified to N6-(pyridoxal phosphate)lysine. Residue 351–353 (SPF) coordinates (6S)-5,6,7,8-tetrahydrofolate.

Belongs to the SHMT family. As to quaternary structure, homodimer. Pyridoxal 5'-phosphate is required as a cofactor.

It is found in the cytoplasm. The enzyme catalyses (6R)-5,10-methylene-5,6,7,8-tetrahydrofolate + glycine + H2O = (6S)-5,6,7,8-tetrahydrofolate + L-serine. It functions in the pathway one-carbon metabolism; tetrahydrofolate interconversion. The protein operates within amino-acid biosynthesis; glycine biosynthesis; glycine from L-serine: step 1/1. Functionally, catalyzes the reversible interconversion of serine and glycine with tetrahydrofolate (THF) serving as the one-carbon carrier. This reaction serves as the major source of one-carbon groups required for the biosynthesis of purines, thymidylate, methionine, and other important biomolecules. Also exhibits THF-independent aldolase activity toward beta-hydroxyamino acids, producing glycine and aldehydes, via a retro-aldol mechanism. The chain is Serine hydroxymethyltransferase from Thermosipho melanesiensis (strain DSM 12029 / CIP 104789 / BI429).